Reading from the N-terminus, the 425-residue chain is Decarboxylase flvG (425 aa).

Lys-82 is modified (N6-(pyridoxal phosphate)lysine). Residues Ser-213, Gly-250, and 281–284 each bind pyridoxal 5'-phosphate; that span reads EPGR. 331-332 contacts substrate; that stretch reads FE. The active-site Proton donor; shared with dimeric partner is Cys-365. Asp-366 lines the substrate pocket. Position 395 (Tyr-395) interacts with pyridoxal 5'-phosphate.

Belongs to the Orn/Lys/Arg decarboxylase class-II family. Homodimer. Only the dimer is catalytically active, as the active sites are constructed of residues from both monomers. Pyridoxal 5'-phosphate serves as cofactor.

The protein resides in the cytoplasm. It carries out the reaction N(6),N(6)-dimethyl-L-lysine + H(+) = N,N-dimethyl-cadaverine + CO2. Its pathway is secondary metabolite biosynthesis; terpenoid biosynthesis. In terms of biological role, decarboxylase; part of the gene cluster that mediates the biosynthesis of flavunoidine, an alkaloidal terpenoid with a tetracyclic cage-like core connected to dimethylcadaverine via a C-N bond and acylated with 5,5-dimethyl-L-pipecolate. The tetracyclic core is synthesized by the terpene cyclase flvE and the cytochrome P450 monooxygenase flvD. The terpene cyclase flvE catalyzes the cyclization of farnesyl pyrophosphate (FPP) to form (1R,4R,5S)-(+)-acoradiene and the cytochrome P450 monooxygenase flvD is then responsible for oxidative conversion of (1R,4R,5S)-(+)-acoradiene into the tetracyclic cage present in the final product flavunoidine. In parallel, the N-methyltransferase flvH dimethylates L-lysine to give N,N-dimethyl-L-Lysin which is decarboxylated by flvG to afford dimethylcadaverine. The terpene cyclase-like protein flvF is the enzyme that attaches the dimethylcadaverine precusor at the C-7 of the tetracyclic cage to yield pre-flavunoidine. The cytochrome monooxygenase flvC hydroxylates the C-10 position of pre-flavunoidine whereas the NRPS flvI acylates the terpenoid core at the hydroxylated C-10 with dimethylpipecolate to yield final flavunoidine. The bifunctional enzyme flvA and the dehydrogenase flvB are responsible for the synthesis of the dimethylpipecolate precursor. The PLP-dependent lyase domain of flvA might use L-O-acetyl-homoserine and alpha-keto-isovalerate to form an intermediary ketone that can cyclize intramolecularly to yield an imine. The imine can be reduced by flvB to yield the 6-carboxylated pipecolate. The C-terminal alpha-KG-dependent oxygenase domain of flvA is then proposed to catalyze the decarboxylation to yield dimethylpipecolate. The protein is Decarboxylase flvG of Aspergillus flavus (strain ATCC 200026 / FGSC A1120 / IAM 13836 / NRRL 3357 / JCM 12722 / SRRC 167).